We begin with the raw amino-acid sequence, 777 residues long: Polyribonucleotide nucleotidyltransferase (777 aa).

Mg(2+) contacts are provided by Asp494 and Asp500. The 60-residue stretch at 561–620 (PRIITLQIDPSKIGALIGPGGKTIRSIIEQTGAQIDVEDDGRVFVTTPDADGARMAQSLI) folds into the KH domain. The region spanning 630–699 (GEIFTGKVVR…GTGKLSLSRR (70 aa)) is the S1 motif domain. Positions 703–777 (TGETAEQRKS…NDRRGGGFRG (75 aa)) are disordered. Positions 718–727 (GPRGGGGGGD) are enriched in gly residues. 2 stretches are compositionally biased toward basic and acidic residues: residues 728-761 (RGPR…DRGP) and 768-777 (NDRRGGGFRG).

Belongs to the polyribonucleotide nucleotidyltransferase family. Mg(2+) serves as cofactor.

The protein resides in the cytoplasm. The catalysed reaction is RNA(n+1) + phosphate = RNA(n) + a ribonucleoside 5'-diphosphate. Functionally, involved in mRNA degradation. Catalyzes the phosphorolysis of single-stranded polyribonucleotides processively in the 3'- to 5'-direction. This Herpetosiphon aurantiacus (strain ATCC 23779 / DSM 785 / 114-95) protein is Polyribonucleotide nucleotidyltransferase.